A 397-amino-acid polypeptide reads, in one-letter code: Tryptophan synthase beta chain (397 aa).

K91 carries the post-translational modification N6-(pyridoxal phosphate)lysine.

The protein belongs to the TrpB family. As to quaternary structure, tetramer of two alpha and two beta chains. Pyridoxal 5'-phosphate is required as a cofactor.

The enzyme catalyses (1S,2R)-1-C-(indol-3-yl)glycerol 3-phosphate + L-serine = D-glyceraldehyde 3-phosphate + L-tryptophan + H2O. The protein operates within amino-acid biosynthesis; L-tryptophan biosynthesis; L-tryptophan from chorismate: step 5/5. Its function is as follows. The beta subunit is responsible for the synthesis of L-tryptophan from indole and L-serine. This chain is Tryptophan synthase beta chain, found in Bacillus cereus (strain Q1).